Reading from the N-terminus, the 139-residue chain is Orientotoxin-2 (139 aa).

In terms of tissue distribution, expressed by the venom gland.

The protein localises to the secreted. It carries out the reaction a 1,2-diacyl-sn-glycero-3-phosphocholine + H2O = a 1-acyl-sn-glycero-3-phosphocholine + a fatty acid + H(+). In terms of biological role, has a highly toxic phospholipase A2 activity. This chain is Orientotoxin-2, found in Vespa orientalis (Oriental hornet).